The chain runs to 216 residues: Glycerol-3-phosphate acyltransferase (216 aa).

A run of 6 helical transmembrane segments spans residues 3-23, 48-68, 82-102, 112-132, 142-162, and 166-186; these read FPIFALFSFVSGSIPFGYWIA, IGWKFGFIVLALDITKGMLPV, FQLLCGVCAVLGHMFSPFLGF, FGVFLVLTPIACLGAVLVFWV, LGSIFASITLPLVYAFSTILL, and EVSYWVLGTMVFISFGIILTH.

Belongs to the PlsY family. Probably interacts with PlsX.

It is found in the cell inner membrane. The enzyme catalyses an acyl phosphate + sn-glycerol 3-phosphate = a 1-acyl-sn-glycero-3-phosphate + phosphate. It participates in lipid metabolism; phospholipid metabolism. Functionally, catalyzes the transfer of an acyl group from acyl-phosphate (acyl-PO(4)) to glycerol-3-phosphate (G3P) to form lysophosphatidic acid (LPA). This enzyme utilizes acyl-phosphate as fatty acyl donor, but not acyl-CoA or acyl-ACP. The protein is Glycerol-3-phosphate acyltransferase of Leptospira interrogans serogroup Icterohaemorrhagiae serovar Lai (strain 56601).